A 361-amino-acid chain; its full sequence is Probable S-adenosylmethionine-dependent methyltransferase At5g38780 (361 aa).

S-adenosyl-L-homocysteine-binding residues include Tyr19, Cys64, Asn69, Asp106, Leu107, Ser135, and Phe136. Residues Asn174, Glu260, Phe262, and Asn263 each coordinate Mg(2+).

It belongs to the methyltransferase superfamily. Type-7 methyltransferase family. In terms of assembly, homodimer. The cofactor is Mg(2+).

The polypeptide is Probable S-adenosylmethionine-dependent methyltransferase At5g38780 (Arabidopsis thaliana (Mouse-ear cress)).